Consider the following 513-residue polypeptide: ATP synthase subunit alpha (513 aa).

169-176 is an ATP binding site; it reads GDRQTGKT.

Belongs to the ATPase alpha/beta chains family. In terms of assembly, F-type ATPases have 2 components, CF(1) - the catalytic core - and CF(0) - the membrane proton channel. CF(1) has five subunits: alpha(3), beta(3), gamma(1), delta(1), epsilon(1). CF(0) has three main subunits: a(1), b(2) and c(9-12). The alpha and beta chains form an alternating ring which encloses part of the gamma chain. CF(1) is attached to CF(0) by a central stalk formed by the gamma and epsilon chains, while a peripheral stalk is formed by the delta and b chains.

It is found in the cell inner membrane. It catalyses the reaction ATP + H2O + 4 H(+)(in) = ADP + phosphate + 5 H(+)(out). Produces ATP from ADP in the presence of a proton gradient across the membrane. The alpha chain is a regulatory subunit. In Shewanella baltica (strain OS223), this protein is ATP synthase subunit alpha.